The chain runs to 250 residues: Probable transcriptional regulatory protein Lferr_0060 (250 aa).

The protein belongs to the TACO1 family.

It localises to the cytoplasm. This is Probable transcriptional regulatory protein Lferr_0060 from Acidithiobacillus ferrooxidans (strain ATCC 53993 / BNL-5-31) (Leptospirillum ferrooxidans (ATCC 53993)).